The primary structure comprises 466 residues: Vimentin (466 aa).

2 stretches are compositionally biased toward low complexity: residues 1–13 and 20–31; these read MSTR…SYRR and TASRPSSSRSYV. Residues 1–31 form a disordered region; it reads MSTRTVSSSSYRRMFGGPGTASRPSSSRSYV. S2 bears the N-acetylserine mark. A head region spans residues 2–95; sequence STRTVSSSSY…FSLADAINTE (94 aa). S7 bears the Phosphoserine; alternate mark. Residue S7 is glycosylated (O-linked (GlcNAc) serine; alternate). Phosphoserine is present on residues S8, S9, and S10. Residue T20 is modified to Phosphothreonine. S25 and S26 each carry phosphoserine. T33 carries O-linked (GlcNAc) threonine glycosylation. O-linked (GlcNAc) serine; alternate glycosylation occurs at S34. Phosphoserine; by PKC; alternate is present on S34. A Phosphoserine; by CaMK2, PKA, PKC and ROCK2 modification is found at S39. S42, S47, S49, and S51 each carry phosphoserine. Y53 carries the post-translational modification Phosphotyrosine. A Phosphoserine modification is found at S55. S56 is subject to Phosphoserine; by CDK5 and CDK1. At Y61 the chain carries Phosphotyrosine. At S66 the chain carries Phosphoserine. A Phosphoserine; by AURKB and ROCK2 modification is found at S72. Residues S73 and S87 each carry the phosphoserine modification. Residues 96-131 are coil 1A; sequence FKNTRTNEKVELQELNDRFANYIDKVRFLEQQNKIL. A coiled-coil region spans residues 96–131; it reads FKNTRTNEKVELQELNDRFANYIDKVRFLEQQNKIL. The IF rod domain occupies 103-411; that stretch reads EKVELQELND…KLLEGEESRI (309 aa). A Glycyl lysine isopeptide (Lys-Gly) (interchain with G-Cter in SUMO2) cross-link involves residue K104. Y117 is modified (phosphotyrosine). N6-acetyllysine; alternate is present on residues K120, K129, and K139. K120 and K129 each carry N6-succinyllysine; alternate. Glycyl lysine isopeptide (Lys-Gly) (interchain with G-Cter in SUMO2); alternate cross-links involve residues K120, K129, and K139. Residues 132–153 are linker 1; it reads LAELEQLKGQGKSRLGDLYEEE. S144 bears the Phosphoserine mark. Residues 154-245 are a coiled coil; it reads MRELRRQVDQ…KLHDEEIQEL (92 aa). A coil 1B region spans residues 154–245; it reads MRELRRQVDQ…KLHDEEIQEL (92 aa). The residue at position 168 (K168) is an N6-acetyllysine. At K188 the chain carries N6-acetyllysine; alternate. Position 188 is an N6-succinyllysine; alternate (K188). The residue at position 214 (S214) is a Phosphoserine. K223 is modified (N6-acetyllysine; alternate). K223 participates in a covalent cross-link: Glycyl lysine isopeptide (Lys-Gly) (interchain with G-Cter in SUMO2); alternate. Position 226 is a phosphoserine (S226). The residue at position 235 (K235) is an N6-acetyllysine. The tract at residues 246 to 268 is linker 12; it reads QAQIQEQHVQIDMDVSKPDLTAA. Residue K262 forms a Glycyl lysine isopeptide (Lys-Gly) (interchain with G-Cter in SUMO2) linkage. The coil 2 stretch occupies residues 269 to 407; the sequence is LRDVRQQYES…ATYRKLLEGE (139 aa). K294 is modified (N6-acetyllysine; alternate). At K294 the chain carries N6-succinyllysine; alternate. Residue K294 forms a Glycyl lysine isopeptide (Lys-Gly) (interchain with G-Cter in SUMO2); alternate linkage. At S299 the chain carries Phosphoserine. Residues 303–407 adopt a coiled-coil conformation; that stretch reads NRNNDALRQA…ATYRKLLEGE (105 aa). K313 is covalently cross-linked (Glycyl lysine isopeptide (Lys-Gly) (interchain with G-Cter in SUMO2)). The residue at position 325 (S325) is a Phosphoserine. The [IL]-x-C-x-x-[DE] motif motif lies at 326 to 329; it reads LTCE. K373 is modified (N6-acetyllysine; alternate). K373 participates in a covalent cross-link: Glycyl lysine isopeptide (Lys-Gly) (interchain with G-Cter in SUMO2); alternate. Positions 408–466 are tail; that stretch reads ESRISLPLPNFSSLNLRETNLESLPLVDTHSKRTLLIKTVETRDGQVINETSQHHDDLE. S409, S412, S419, and S420 each carry phosphoserine. T426 bears the Phosphothreonine mark. A Phosphoserine modification is found at S430. Phosphothreonine is present on T436. S438 bears the Phosphoserine mark. A Glycyl lysine isopeptide (Lys-Gly) (interchain with G-Cter in SUMO2) cross-link involves residue K439. At K445 the chain carries N6-acetyllysine; alternate. K445 carries the N6-succinyllysine; alternate modification. K445 participates in a covalent cross-link: Glycyl lysine isopeptide (Lys-Gly) (interchain with G-Cter in SUMO2); alternate. Residue K445 forms a Glycyl lysine isopeptide (Lys-Gly) (interchain with G-Cter in SUMO1); alternate linkage. T446 and T458 each carry phosphothreonine. Residue S459 is modified to Phosphoserine.

Belongs to the intermediate filament family. Homomer assembled from elementary dimers. Identified in complexes that contain VIM, EZR, AHNAK, BFSP1, BFSP2, ANK2, PLEC, PRX and spectrin. Interacts with BCAS3. Interacts with LGSN. Interacts with SYNM. Interacts (via rod region) with PLEC (via CH 1 domain). Interacts with STK33. Interacts with LARP6. Interacts with RAB8B. Interacts with TOR1A; the interaction associates TOR1A with the cytoskeleton. Interacts with TOR1AIP1. Interacts with TOR1AIP1. Interacts with DIAPH1. Interacts with EPPK1; interaction is dependent of higher-order structure of intermediate filament. Interacts with the non-receptor tyrosine kinase SRMS; the interaction leads to phosphorylation of VIM. Interacts with NOD2. Interacts (via head region) with CORO1C. Interacts with HDGF. Interacts with PRKCE (via phorbol-ester/DAG-type 2 domain). Interacts with BFSP2. Interacts with PPL. Interacts with PKP1 and PKP2. Interacts with SCRIB (via PDZ domains); the interaction protects SCRIB from proteasomal degradation and facilitates SCRIB localization to intermediate filaments, the interaction is reduced by cell contact inhibition. One of the most prominent phosphoproteins in various cells of mesenchymal origin. Phosphorylation is enhanced during cell division, at which time vimentin filaments are significantly reorganized. Phosphorylation by PKN1 inhibits the formation of filaments. Filament disassembly during mitosis is promoted by phosphorylation at Ser-55 as well as by nestin. Phosphorylated at Ser-56 by CDK5 during neutrophil secretion in the cytoplasm. Phosphorylated by STK33. Phosphorylated on tyrosine residues by SRMS. In terms of processing, S-nitrosylation is induced by interferon-gamma and oxidatively-modified low-densitity lipoprotein (LDL(ox)) possibly implicating the iNOS-S100A8/9 transnitrosylase complex.

The protein localises to the cytoplasm. It localises to the cytoskeleton. Its subcellular location is the nucleus matrix. The protein resides in the cell membrane. In terms of biological role, vimentins are class-III intermediate filaments found in various non-epithelial cells, especially mesenchymal cells. Vimentin is attached to the nucleus, endoplasmic reticulum, and mitochondria, either laterally or terminally. Plays a role in cell directional movement, orientation, cell sheet organization and Golgi complex polarization at the cell migration front. Protects SCRIB from proteasomal degradation and facilitates its localization to intermediate filaments in a cell contact-mediated manner. Functionally, involved with LARP6 in the stabilization of type I collagen mRNAs for CO1A1 and CO1A2. The protein is Vimentin (VIM) of Sus scrofa (Pig).